The primary structure comprises 726 residues: Catalase-peroxidase (726 aa).

A disordered region spans residues 1–33 (MSTTDDTHNTLSTGKCPFHQGGHDRSAGAGTAS). The segment at residues 105–226 (WHGAGTYRSI…LGATEMGLIY (122 aa)) is a cross-link (tryptophyl-tyrosyl-methioninium (Trp-Tyr) (with M-252)). Histidine 106 serves as the catalytic Proton acceptor. A cross-link (tryptophyl-tyrosyl-methioninium (Tyr-Met) (with W-105)) is located at residues 226–252 (YVNPEGPDHSGEPLSAAAAIRATFGNM). Histidine 267 lines the heme b pocket.

It belongs to the peroxidase family. Peroxidase/catalase subfamily. As to quaternary structure, homodimer or homotetramer. Heme b serves as cofactor. Post-translationally, formation of the three residue Trp-Tyr-Met cross-link is important for the catalase, but not the peroxidase activity of the enzyme.

It carries out the reaction H2O2 + AH2 = A + 2 H2O. The enzyme catalyses 2 H2O2 = O2 + 2 H2O. Functionally, bifunctional enzyme with both catalase and broad-spectrum peroxidase activity. The protein is Catalase-peroxidase of Salmonella paratyphi B (strain ATCC BAA-1250 / SPB7).